The sequence spans 354 residues: MGLCQSAEDKELTLKSKAIDKEMMANHMSQAKVVKLLLLGAGECGKSTVLKQMRILHDHGFTAEESEQQKSVVFNNTLQAMISILKGMESLRMTFDKPIRENDAKFVMEAHKMLQEAKVFPEELANALQALYSDKGIQTVMAKGNEFQMPESAPHFLGSLDRIKLPDYTPTEQDILLSRIKTTGIVEVKFQMKSVDFRVFDVGGQRSERKKWIHCFEDVNAIIFIAAISEYDQVLFEDETTNRMIESMRLFESICNSRWFINTSMILFLNKKDLFAEKIKRTSIKSAFPDYKGAQTYDESCRYIEEKFDGLNANPEKTIYMHQTCATDTDQVQMILDSVIDMIIQANLQGCGLY.

A lipid anchor (N-myristoyl glycine) is attached at glycine 2. The S-palmitoyl cysteine moiety is linked to residue cysteine 4. The 323-residue stretch at 32–354 folds into the G-alpha domain; it reads KVVKLLLLGA…QANLQGCGLY (323 aa). Residues 35-48 are G1 motif; the sequence is KLLLLGAGECGKST. GTP-binding positions include 40–47, 176–182, 201–205, 270–273, and alanine 326; these read GAGECGKS, LLSRIKT, DVGGQ, and NKKD. Positions 47 and 182 each coordinate Mg(2+). The G2 motif stretch occupies residues 174–182; that stretch reads DILLSRIKT. Residues 197–206 form a G3 motif region; the sequence is FRVFDVGGQR. The interval 266–273 is G4 motif; sequence ILFLNKKD. The interval 324 to 329 is G5 motif; the sequence is TCATDT.

This sequence belongs to the G-alpha family. G(q) subfamily. As to quaternary structure, g proteins are composed of 3 units; alpha, beta and gamma. The alpha chain contains the guanine nucleotide binding site.

Its function is as follows. Guanine nucleotide-binding proteins (G proteins) are involved as modulators or transducers in various transmembrane signaling systems. Promotes transcription of 3',5'-cyclic phosphodiesterases pde-1 and pde-5, leading to reduced cGMP levels in sensory neurons. This causes suppression of insulin production and signaling which leads to increased daf-16 activity and contributes to increased adult lifespan and resistance to oxidative stress. In addition, by reducing cGMP levels, inhibits TGF-beta signaling pathways. Involved in behavioral response to P.aeruginosa by controlling the expression of daf-7, a member of the TGF-beta family, in ASJ sensory neurons. The polypeptide is Guanine nucleotide-binding protein alpha-3 subunit (gpa-3) (Caenorhabditis briggsae).